An 815-amino-acid polypeptide reads, in one-letter code: Calpain-3 (815 aa).

A disordered region spans residues 7 to 36 (ASVAPRTAAEPRSPGPVPHPAQSKATEAGG). The Calpain catalytic domain maps to 74–417 (LYVDPEFPPD…FTKLEICNLT (344 aa)). Catalysis depends on residues Cys129, His334, and Asn358. Residues 418 to 586 (ADALQSDKLQ…KRNLSEEVEN (169 aa)) are domain III. The tract at residues 587–649 (TISVDRPVPI…QESEEQQQFR (63 aa)) is linker. The interval 605-646 (SNKELGVDQESEEGKGKTSPDKQEQSPQPQPGSSDQESEEQQ) is disordered. Basic and acidic residues predominate over residues 616-628 (EEGKGKTSPDKQE). The span at 629 to 639 (QSPQPQPGSSD) shows a compositional bias: low complexity. EF-hand domains lie at 643 to 677 (EEQQ…VVNK), 686 to 719 (FTLE…NKIK), 716 to 751 (NKIK…AGFH), and 781 to 815 (VRLE…TMYA). A domain IV region spans residues 650–815 (NIFKQIAGDD…LEWLQLTMYA (166 aa)). Residues Ala656, Asp659, Glu661, Glu666, Asp699, Asp701, Ser703, Lys705, Glu710, Asp729, Asp731, Ser733, Thr735, Glu740, Asp794, Asp796, Asp798, and Ile800 each coordinate Ca(2+).

This sequence belongs to the peptidase C2 family. As to quaternary structure, homodimer; via EF-hand domain 4. Interacts with TTN/titin. Interacts with CMYA5; this interaction, which results in CMYA5 proteolysis, may protect CAPN3 from autolysis. Interacts with SIMC1. Interacts with UTP25; the interaction is required for CAPN3 translocation to the nucleolus.

It localises to the cytoplasm. Its subcellular location is the nucleus. The protein resides in the nucleolus. The catalysed reaction is Broad endopeptidase activity.. Its activity is regulated as follows. Activated by micromolar concentrations of calcium and inhibited by calpastatin. Calcium-regulated non-lysosomal thiol-protease. Proteolytically cleaves CTBP1. Mediates, with UTP25, the proteasome-independent degradation of p53/TP53. This is Calpain-3 (CAPN3) from Macaca fascicularis (Crab-eating macaque).